Reading from the N-terminus, the 271-residue chain is uncharacterized protein (271 aa).

This is an uncharacterized protein from Galliformes (FAdV-1).